Here is an 835-residue protein sequence, read N- to C-terminus: Transcription intermediary factor 1-beta (835 aa).

Positions 14-24 (AATAASAASGS) are enriched in low complexity. The disordered stretch occupies residues 14 to 57 (AATAASAASGSPGSGEGSAGGEKRPAASSAAAASASASSPAGGG). A phosphoserine mark is found at S24, S27, and S31. Residue K36 forms a Glycyl lysine isopeptide (Lys-Gly) (interchain with G-Cter in SUMO2) linkage. A compositionally biased stretch (low complexity) spans 39 to 53 (AASSAAAASASASSP). At S52 the chain carries Phosphoserine. The RING-type zinc finger occupies 67 to 123 (CGVCRERLRPERDPRLLPCLHSACSACLGPATPAAANNSGDGGSAGDGAMVDCPVCK). K129 is covalently cross-linked (Glycyl lysine isopeptide (Lys-Gly) (interchain with G-Cter in SUMO2)). Phosphoserine is present on S140. Residues 150 to 197 (DANQCCTSCEDNAPATSYCVECSEPLCETCVEAHQRVKYTKDHTVRST) form a B box-type 1; atypical zinc finger. Residues C155, C158, C179, and H183 each coordinate Zn(2+). A Glycyl lysine isopeptide (Lys-Gly) (interchain with G-Cter in SUMO2) cross-link involves residue K201. Residues 206-247 (ERTVYCNVHKHEPLVLFCESCDTLTCRDCQLNAHKDHQYQFL) form a B box-type 2 zinc finger. Residues C211, H214, C234, and H239 each coordinate Zn(2+). The interval 248 to 378 (EDAVRNQRKL…LIYFQLHRAL (131 aa)) is leucine zipper alpha helical coiled-coil region. The segment at 249-378 (DAVRNQRKLL…LIYFQLHRAL (130 aa)) is interaction with MAGEC2. Glycyl lysine isopeptide (Lys-Gly) (interchain with G-Cter in SUMO2) cross-links involve residues K256 and K263. K268 is subject to N6-acetyllysine. A Glycyl lysine isopeptide (Lys-Gly) (interchain with G-Cter in SUMO2) cross-link involves residue K274. K306 is modified (N6-acetyllysine; alternate). A Glycyl lysine isopeptide (Lys-Gly) (interchain with G-Cter in SUMO2); alternate cross-link involves residue K306. K321 is covalently cross-linked (Glycyl lysine isopeptide (Lys-Gly) (interchain with G-Cter in SUMO2)). Position 342 is an N6-acetyllysine (K342). K368 is covalently cross-linked (Glycyl lysine isopeptide (Lys-Gly) (interchain with G-Cter in SUMO2)). Residues 368–372 (KLIYF) are involved in binding PPP1CA. N6-acetyllysine; alternate is present on K379. K379 participates in a covalent cross-link: Glycyl lysine isopeptide (Lys-Gly) (interchain with G-Cter in SUMO2); alternate. A Glycyl lysine isopeptide (Lys-Gly) (interchain with G-Cter in SUMO1); alternate cross-link involves residue K379. K409 participates in a covalent cross-link: Glycyl lysine isopeptide (Lys-Gly) (interchain with G-Cter in SUMO2). The disordered stretch occupies residues 413–481 (ERPGTNSTGP…SRSGEGEVSG (69 aa)). A Phosphoserine modification is found at S419. K436 is covalently cross-linked (Glycyl lysine isopeptide (Lys-Gly) (interchain with G-Cter in SUMO2)). Polar residues predominate over residues 436–445 (KQGSGSSQPM). A phosphoserine mark is found at S439 and S441. Residue K470 forms a Glycyl lysine isopeptide (Lys-Gly) (interchain with G-Cter in SUMO2); alternate linkage. A Glycyl lysine isopeptide (Lys-Gly) (interchain with G-Cter in SUMO1); alternate cross-link involves residue K470. Residue R471 is modified to Citrulline. Position 472 is a phosphoserine (S472). Citrulline is present on R473. Phosphoserine occurs at positions 474, 480, and 490. The segment at 477 to 514 (GEVSGLMRKVPRVSLERLDLDLTSDSQPPVFKVFPGST) is HP1 box. A PxVxL motif motif is present at residues 482–495 (LMRKVPRVSLERLD). T499 is modified (phosphothreonine). At S502 the chain carries Phosphoserine. K508 participates in a covalent cross-link: Glycyl lysine isopeptide (Lys-Gly) (interchain with G-Cter in SUMO2). A Glycyl lysine isopeptide (Lys-Gly) (interchain with G-Cter in SUMO2); alternate cross-link involves residue K555. K555 is covalently cross-linked (Glycyl lysine isopeptide (Lys-Gly) (interchain with G-Cter in SUMO); alternate). Residue K576 forms a Glycyl lysine isopeptide (Lys-Gly) (interchain with G-Cter in SUMO2) linkage. At S595 the chain carries Phosphoserine. A PHD-type zinc finger spans residues 626-673 (ATICRVCQKPGDLVMCNQCEFCFHLDCHLPSLQDVPGEEWSCSLCHVL). A Glycyl lysine isopeptide (Lys-Gly) (interchain with G-Cter in SUMO) cross-link involves residue K677. 3 positions are modified to phosphoserine: S684, S690, and S698. One can recognise a Bromo domain in the interval 696-800 (KLSPANQRKC…RFFETRMNDA (105 aa)). K751 participates in a covalent cross-link: Glycyl lysine isopeptide (Lys-Gly) (interchain with G-Cter in SUMO2); alternate. K751 participates in a covalent cross-link: Glycyl lysine isopeptide (Lys-Gly) (interchain with G-Cter in SUMO1); alternate. K751 is covalently cross-linked (Glycyl lysine isopeptide (Lys-Gly) (interchain with G-Cter in SUMO); alternate). The residue at position 753 (S753) is a Phosphoserine. Residue Y756 is modified to Phosphotyrosine. A Phosphoserine modification is found at S758. Residues K771, K775, and K780 each carry the N6-acetyllysine; alternate modification. Glycyl lysine isopeptide (Lys-Gly) (interchain with G-Cter in SUMO2); alternate cross-links involve residues K771, K775, and K780. Residue K780 forms a Glycyl lysine isopeptide (Lys-Gly) (interchain with G-Cter in SUMO1); alternate linkage. Phosphoserine is present on S785. A Glycyl lysine isopeptide (Lys-Gly) (interchain with G-Cter in SUMO2) cross-link involves residue K805. Position 825 is a phosphoserine; by ATM and ATR and dsDNA kinase (S825).

It belongs to the TRIM/RBCC family. As to quaternary structure, interacts with ZNF382. Interacts with SETX. Oligomer; the RBCC domain homotrimerizes and interacts with one molecule of KRAB to form the KRAB-KAP1 corepressor complex. Binding to a KRAB domain is an absolute requirement for silencing gene expression. Interacts with CEBPB and NR3C1. Interacts with a number of KRAB-ZFP proteins including ZNF10, ZFP53, ZFP68 and ZNF256. Interacts with NCOR1, NR3C1 and CHD3. Interacts with CEBPB (via the RING-type and PHD-type zinc fingers). Component of a ternary complex that includes TRIM28, a HP1 protein (CBX1, CBX3 OR CBX5), a KRAB domain-containing protein, and DNA. Interacts with CBX5 (via the PxVxL motif); the interaction occurs in interphase nuclei and competes for binding POGZ. Interacts with POGZ; the interaction competes for interaction with CBX5. Interacts with SETDB1; the interaction is enhanced by KAP1 sumoylation, stimulates SETDB1 histone methyltransferase activity and gene silencing. Interacts (via the PHD-type zinc finger) with UBE2I; the interaction is required for sumoylation and repressor activity. Component of the TRIM28/KAP1-ERBB4-MDM2 complex involved in connecting growth factor and DNA damage responses. Interacts directly with ERBB4; the interaction represses ERBB4-mediated transcription activity. Interacts with MDM2; the interaction contributes to p53/TP53 inactivation. Component of the TRIM28/KAP1-MDM2-p53/TP53; involved in regulating p53/TP53 stabilization and activity. Interacts (via the leucine zipper alpha helical coiled-coil) with E2F1 (central region); the interaction inhibits E2F1 acetylation and transcriptional activity. Interacts with PPP1CA; the interaction dephosphorylates TRIM28 at Ser-824 and forms a complex at the p21 promoter site. Interacts with PPP1CB; the interaction is weak but is increased on dephosphorylation at Ser-824. Interacts with SMARCAD1. Interacts with, and sumoylates IRF7. Interacts with MAGEC2. Part of a complex composed of TRIM28, HDAC1, HDAC2 and EHMT2. Interacts with AICDA. The large PER complex involved in the histone methylation is composed of at least PER2, CBX3, TRIM28, SUV39H1 and/or SUV39H2; CBX3 mediates the formation of the complex. Interacts with NR4A3; the interactions potentiates NR4A3 activity on NurRE promoter. Interacts (unphosphorylated or phosphorylated form) with ZBTB1 (via BTB domain). Probably part of a corepressor complex containing ZNF304, TRIM28, SETDB1 and DNMT1. Interacts with ATRX. Forms a complex with ATRX, SETDB1 and ZNF274. Interacts with ZFP568; the interaction mediates ZFP568 transcriptional repression activity. Interacts with RRP1B. Interacts with CRY1. Interacts with ZNF263; recruited to the SIX3 promoter along with other proteins involved in chromatin modification and transcriptional corepression where it contributes to transcriptional repression. Interacts with CYREN (via XLF motif). Interacts with TRIM17; this interaction prevents TRIM28 activity. Interacts with ZNF746. Interacts with PHF13. Interacts with ZNF354C. Interacts with ZNF432; the interaction is independent of PARP1. Post-translationally, ATM-induced phosphorylation on Ser-825 represses sumoylation leading to the de-repression of expression of a subset of genes involved in cell cycle control and apoptosis in response to genotoxic stress. Dephosphorylation by the phosphatases, PPP1CA and PP1CB forms, allows sumoylation and expression of TRIM28 target genes. In terms of processing, sumoylation/desumoylation events regulate TRIM28-mediated transcriptional repression. Sumoylation is required for interaction with CHD3 and SETDB1 and the corepressor activity. Represses and is repressed by Ser-824 phosphorylation. Enhances the TRIM28 corepressor activity, inhibiting transcriptional activity of a number of genes including GADD45A and CDKN1A/p21. Lys-555, Lys-780 and Lys-805 are the major sites of sumoylation. In response to Dox-induced DNA damage, enhanced phosphorylation on Ser-825 prevents sumoylation and allows de-repression of CDKN1A/p21. Auto-ubiquitinated; enhanced by MAGEA2 and MAGEC2. Post-translationally, citrullinated by PADI4. In terms of processing, ADP-ribosylated by SIRT6, promoting TRIM28/KAP1 interaction with CBX5, thereby contributing to the packaging of LINE-1 retrotransposon elements into transcriptionally repressive heterochromatin.

It is found in the nucleus. The catalysed reaction is S-ubiquitinyl-[E2 ubiquitin-conjugating enzyme]-L-cysteine + [acceptor protein]-L-lysine = [E2 ubiquitin-conjugating enzyme]-L-cysteine + N(6)-ubiquitinyl-[acceptor protein]-L-lysine.. Its pathway is protein modification; protein sumoylation. Its function is as follows. Nuclear corepressor for KRAB domain-containing zinc finger proteins (KRAB-ZFPs). Mediates gene silencing by recruiting CHD3, a subunit of the nucleosome remodeling and deacetylation (NuRD) complex, and SETDB1 (which specifically methylates histone H3 at 'Lys-9' (H3K9me)) to the promoter regions of KRAB target genes. Enhances transcriptional repression by coordinating the increase in H3K9me, the decrease in histone H3 'Lys-9 and 'Lys-14' acetylation (H3K9ac and H3K14ac, respectively) and the disposition of HP1 proteins to silence gene expression. Recruitment of SETDB1 induces heterochromatinization. May play a role as a coactivator for CEBPB and NR3C1 in the transcriptional activation of ORM1. Also a corepressor for ERBB4. Inhibits E2F1 activity by stimulating E2F1-HDAC1 complex formation and inhibiting E2F1 acetylation. May serve as a partial backup to prevent E2F1-mediated apoptosis in the absence of RB1. Important regulator of CDKN1A/p21(CIP1). Has E3 SUMO-protein ligase activity toward itself via its PHD-type zinc finger. Also specifically sumoylates IRF7, thereby inhibiting its transactivation activity. Ubiquitinates p53/TP53 leading to its proteasomal degradation; the function is enhanced by MAGEC2 and MAGEA2, and possibly MAGEA3 and MAGEA6. Mediates the nuclear localization of KOX1, ZNF268 and ZNF300 transcription factors. In association with isoform 2 of ZFP90, is required for the transcriptional repressor activity of FOXP3 and the suppressive function of regulatory T-cells (Treg). Probably forms a corepressor complex required for activated KRAS-mediated promoter hypermethylation and transcriptional silencing of tumor suppressor genes (TSGs) or other tumor-related genes in colorectal cancer (CRC) cells. Required to maintain a transcriptionally repressive state of genes in undifferentiated embryonic stem cells (ESCs). In ESCs, in collaboration with SETDB1, is also required for H3K9me3 and silencing of endogenous and introduced retroviruses in a DNA-methylation independent-pathway. Associates at promoter regions of tumor suppressor genes (TSGs) leading to their gene silencing. The SETDB1-TRIM28-ZNF274 complex may play a role in recruiting ATRX to the 3'-exons of zinc finger genes with atypical chromatin signatures to establish or maintain/protect H3K9me3 at these transcriptionally active regions. The polypeptide is Transcription intermediary factor 1-beta (Rattus norvegicus (Rat)).